Reading from the N-terminus, the 53-residue chain is MRTCSFCNKEIEEGTGKMYVKKDGSIYFFCSSKCEKNMIKLGRVPRKVKWVKE.

Residues Cys4, Cys7, Cys30, and Cys34 each contribute to the Zn(2+) site. The segment at 4 to 34 (CSFCNKEIEEGTGKMYVKKDGSIYFFCSSKC) adopts a C4-type zinc-finger fold.

The protein belongs to the eukaryotic ribosomal protein eL24 family. Part of the 50S ribosomal subunit. Forms a cluster with proteins L3 and L14. Zn(2+) serves as cofactor.

In terms of biological role, binds to the 23S rRNA. The protein is Large ribosomal subunit protein eL24 of Methanobrevibacter smithii (strain ATCC 35061 / DSM 861 / OCM 144 / PS).